The sequence spans 922 residues: Non-centrosomal microtubule array protein 1 (922 aa).

Over residues 1–10 (MSNERVSTGS) the composition is skewed to polar residues. Disordered stretches follow at residues 1 to 134 (MSNE…HLPP), 250 to 277 (PVRLRKRGDTSRRDAVEAGFEPRDTVPR), 465 to 491 (KSRHLSESRDEMRGGAERRGSGGQMNL), and 533 to 563 (TQKEQSSHSTPSQSRHSSSKSSHFNGSSNLS). Basic and acidic residues-rich tracts occupy residues 43 to 54 (SMERKDMPDRPK) and 70 to 94 (PKDRSSDSGDGDSPRPRKFSSKECA). A compositionally biased stretch (low complexity) spans 99 to 113 (SNTSSEHSSRSNSST). 2 stretches are compositionally biased toward basic and acidic residues: residues 256 to 276 (RGDTSRRDAVEAGFEPRDTVP) and 468 to 484 (HLSESRDEMRGGAERRG). Residues 539–563 (SHSTPSQSRHSSSKSSHFNGSSNLS) are compositionally biased toward low complexity. A coiled-coil region spans residues 564–728 (TSEQLRLQEM…RSVSTLRLEQ (165 aa)).

The protein resides in the cytoplasm. The protein localises to the cytoskeleton. It is found in the apical cell membrane. It localises to the cell junction. Its subcellular location is the hemidesmosome. The protein resides in the adherens junction. Functionally, plays a role in the assembly of microtubule arrays in the germline acting redundantly with ptrn-1 to control circumferential microtubule assembly along the body which is necessary for larval development, viability, and morphology and integrity of the epidermis. Required for microtubule stability and anchorage by binding to microtubule minus ends. Recruited to hemidesomosomes in early embryonic elongation to direct the nucleation and growth of non-centrosomal microtubules. Required for normal nuclear migration in the embryonic epidermis. Its function is as follows. Directs the assembly of non-centrosomal microtubule arrays that determine the position of nuclei within intracellular compartments in the epidermis and this is independent of ptrn-1 activity. In Caenorhabditis elegans, this protein is Non-centrosomal microtubule array protein 1.